A 161-amino-acid polypeptide reads, in one-letter code: Cyclic pyranopterin monophosphate synthase (161 aa).

Substrate contacts are provided by residues 75–77 (LCH) and 113–114 (ME). Residue Asp-128 is part of the active site.

It belongs to the MoaC family. In terms of assembly, homohexamer; trimer of dimers.

The enzyme catalyses (8S)-3',8-cyclo-7,8-dihydroguanosine 5'-triphosphate = cyclic pyranopterin phosphate + diphosphate. It participates in cofactor biosynthesis; molybdopterin biosynthesis. Functionally, catalyzes the conversion of (8S)-3',8-cyclo-7,8-dihydroguanosine 5'-triphosphate to cyclic pyranopterin monophosphate (cPMP). In Methylobacillus flagellatus (strain ATCC 51484 / DSM 6875 / VKM B-1610 / KT), this protein is Cyclic pyranopterin monophosphate synthase.